The following is a 232-amino-acid chain: Ribonuclease P protein component 3 (232 aa).

Belongs to the eukaryotic/archaeal RNase P protein component 3 family. Consists of a catalytic RNA component and at least 5 protein subunits.

The protein resides in the cytoplasm. The enzyme catalyses Endonucleolytic cleavage of RNA, removing 5'-extranucleotides from tRNA precursor.. In terms of biological role, part of ribonuclease P, a protein complex that generates mature tRNA molecules by cleaving their 5'-ends. This chain is Ribonuclease P protein component 3, found in Methanococcus maripaludis (strain DSM 14266 / JCM 13030 / NBRC 101832 / S2 / LL).